The sequence spans 338 residues: MRVLVTGGSGYIGSHTCVQLLQNGHDVIILDNLCNSKRSVLPVIERLGGKHPTFVEGDIRNEALMTEILHDHAIDTVIHFAGLKAVGESVQKPLEYYDNNVNGTLRLISAMRAANVKNFIFSSSATVYGDQPKIPYVESFPTGTPQSPYGKSKLMVEQILTDLQKAQPDWSIALLRYFNPVGAHPSGDMGEDPQGIPNNLMPYIAQVAVGRRDSLAIFGNDYPTEDGTGVRDYIHVMDLADGHVVAMEKLANKPGVHIYNLGAGVGNSVLDVVNAFSKACGKPVNYHFAPRREGDLPAYWADASKADRELNWRVTRTLDEMAQDTWHWQSRHPQGYPD.

NAD(+) contacts are provided by residues 11–12 (YI), 31–36 (DNLCNS), 58–59 (DI), 80–84 (FAGLK), Asn-99, Ser-124, Tyr-149, Lys-153, and Phe-178. Substrate is bound by residues Ser-124 and Tyr-149. The Proton acceptor role is filled by Tyr-149. Substrate contacts are provided by residues Asn-179, 199-200 (NL), 216-218 (AIF), Arg-231, 292-295 (REGD), and Tyr-299.

It belongs to the NAD(P)-dependent epimerase/dehydratase family. As to quaternary structure, homodimer. NAD(+) serves as cofactor.

It catalyses the reaction UDP-alpha-D-glucose = UDP-alpha-D-galactose. It functions in the pathway carbohydrate metabolism; galactose metabolism. Its activity is regulated as follows. Inhibited by UDP-phenol and NaBH3CN. Its function is as follows. Involved in the metabolism of galactose. Catalyzes the conversion of UDP-galactose (UDP-Gal) to UDP-glucose (UDP-Glc) through a mechanism involving the transient reduction of NAD. It is only active on UDP-galactose and UDP-glucose. This is UDP-glucose 4-epimerase (galE) from Escherichia coli (strain K12).